The primary structure comprises 560 residues: Putative transport protein VSAL_I2029 (560 aa).

The next 5 helical transmembrane spans lie at 14–34 (ILLL…KIGS), 37–57 (LGSS…GYTF), 66–86 (FMLF…GIFL), 94–114 (LLVL…GYYF), and 161–181 (NLSV…ILLA). RCK C-terminal domains lie at 203–292 (RGIG…FRNG) and 293–376 (KEVF…KIGF). 5 helical membrane passes run 386–406 (LLAF…TMSF), 409–429 (VTFG…LGFL), 451–471 (GLLV…IEYF), 478–498 (VLAA…LVGA), and 539–559 (AGTY…MILL).

It belongs to the AAE transporter (TC 2.A.81) family. YbjL subfamily.

It localises to the cell membrane. The polypeptide is Putative transport protein VSAL_I2029 (Aliivibrio salmonicida (strain LFI1238) (Vibrio salmonicida (strain LFI1238))).